A 299-amino-acid chain; its full sequence is Oxygen-dependent coproporphyrinogen-III oxidase (299 aa).

Residue Ser-92 coordinates substrate. Residues His-96 and His-106 each contribute to the Mn(2+) site. His-106 acts as the Proton donor in catalysis. 108–110 serves as a coordination point for substrate; the sequence is NVR. Mn(2+) contacts are provided by His-145 and His-175. Residues 240 to 275 are important for dimerization; the sequence is YVEFNLVWDRGTLFGLQTGGRTESILMSMPPLVRWE. 258 to 260 is a binding site for substrate; the sequence is GGR.

The protein belongs to the aerobic coproporphyrinogen-III oxidase family. As to quaternary structure, homodimer. Mn(2+) is required as a cofactor.

It localises to the cytoplasm. The catalysed reaction is coproporphyrinogen III + O2 + 2 H(+) = protoporphyrinogen IX + 2 CO2 + 2 H2O. It functions in the pathway porphyrin-containing compound metabolism; protoporphyrin-IX biosynthesis; protoporphyrinogen-IX from coproporphyrinogen-III (O2 route): step 1/1. Involved in the heme biosynthesis. Catalyzes the aerobic oxidative decarboxylation of propionate groups of rings A and B of coproporphyrinogen-III to yield the vinyl groups in protoporphyrinogen-IX. This chain is Oxygen-dependent coproporphyrinogen-III oxidase, found in Escherichia coli (strain SMS-3-5 / SECEC).